Here is a 126-residue protein sequence, read N- to C-terminus: Large ribosomal subunit protein uL22 (126 aa).

The protein belongs to the universal ribosomal protein uL22 family. Part of the 50S ribosomal subunit.

This protein binds specifically to 23S rRNA; its binding is stimulated by other ribosomal proteins, e.g. L4, L17, and L20. It is important during the early stages of 50S assembly. It makes multiple contacts with different domains of the 23S rRNA in the assembled 50S subunit and ribosome. Functionally, the globular domain of the protein is located near the polypeptide exit tunnel on the outside of the subunit, while an extended beta-hairpin is found that lines the wall of the exit tunnel in the center of the 70S ribosome. This Jannaschia sp. (strain CCS1) protein is Large ribosomal subunit protein uL22.